The chain runs to 1907 residues: MAPTWSPSVVSVVGPVGLFLVLLARGCLAEEPPRFIREPKDQIGVSGGVASFVCQATGDPKPRVTWNKKGKKVNSQRFETIDFDESSGAVLRIQPLRTPRDENVYECVAQNSVGEITIHAKLTVLREDQLPPGFPNIDMGPQLKVVERTRTATMLCAASGNPDPEITWFKDFLPVDPSASNGRIKQLRSGALQIESSEETDQGKYECVATNSAGVRYSSPANLYVRVRRVAPRFSILPMSHEIMPGGNVNITCVAVGSPMPYVKWMQGAEDLTPEDDMPVGRNVLELTDVKDSANYTCVAMSSLGVIEAVAQITVKSLPKAPGTPVVTENTATSITVTWDSGNPDPVSYYVIEYKSKSQDGPYQIKEDITTTRYSIGGLSPNSEYEIWVSAVNSIGQGPPSESVVTRTGEQAPASAPRNVQARMLSATTMIVQWEEPVEPNGLIRGYRVYYTMEPEHPVGNWQKHNVDDSLLTTVGSLLEDETYTVRVLAFTSVGDGPLSDPIQVKTQQGVPGQPMNLRAEAKSETSIGLSWSAPRQESVIKYELLFREGDRGREVGRTFDPTTAFVVEDLKPNTEYAFRLAARSPQGLGAFTAVVRQRTLQAKPSAPPQDVKCTSLRSTAILVSWRPPPPETHNGALVGYSVRYRPLGSEDPDPKEVNNIPPTTTQILLEALEKWTEYRVTAVAYTEVGPGPESSPVVVRTDEDVPSAPPRKVEAEALNATAIRVLWRSPTPGRQHGQIRGYQVHYVRMEGAEARGPPRIKDIMLADAQEMVITNLQPETAYSITVAAYTMKGDGARSKPKVVVTKGAVLGRPTLSVQQTPEGSLLARWEPPADAAEDPVLGYRLQFGREDAAPATLELAAWERRFAAPAHKGATYVFRLAARGRAGLGEEAAAALSIPEDAPRGFPQILGAAGNVSAGSVLLRWLPPVPAERNGAIIKYTVSVREAGAPGPATETELAAAAQPGAETALTLRGLRPETAYELRVRAHTRRGPGPFSPPLRYRLARDPVSPKNFKVKMIMKTSVLLSWEFPDNYNSPTPYKIQYNGLTLDVDGRTTKKLITHLKPHTFYNFVLTNRGSSLGGLQQTVTARTAFNMLSGKPSVAPKPDNDGFIVVYLPDGQSPVTVQNYFIVMVPLRKSRGGQFPVLLGSPEDMDLEELIQDISRLQRRSLRHSRQLEVPRPYIAARFSILPAVFHPGNQKQYGGFDNRGLEPGHRYVLFVLAVLQKNEPTFAASPFSDPFQLDNPDPQPIVDGEEGLIWVIGPVLAVVFIICIVIAILLYKNKPDSKRKDSEPRTKCLLNNADLAPHHPKDPVEMRRINFQTPGMLSHPPIPITDMAEHMERLKANDSLKLSQEYESIDPGQQFTWEHSNLEANKPKNRYANVIAYDHSRVILQPLEGIMGSDYINANYVDGYRRQNAYIATQGPLPETFGDFWRMVWEQRSATVVMMTRLEEKSRIKCDQYWPNRGTETYGFIQVTLLDTMELATFCVRTFSLHKNGSSEKREVRHFQFTAWPDHGVPEYPTPFLAFLRRVKTCNPPDAGPIVVHCSAGVGRTGCFIVIDAMLERIKTEKTVDVYGHVTLMRSQRNYMVQTEDQYGFIHEALLEAVGCGNTEVPARSLYTYIQKLAQVEPGEHVTGMELEFKRLASSKAHTSRFITASLPCNKFKNRLVNILPYESSRVCLQPIRGVEGSDYINASFIDGYRQQKAYIATQGPLAETTEDFWRALWENNSTIVVMLTKLREMGREKCHQYWPAERSARYQYFVVDPMAEYNMPQYILREFKVTDARDGQSRTVRQFQFTDWPEQGAPKSGEGFIDFIGQVHKTKEQFGQDGPISVHCSAGVGRTGVFITLSIVLERMRYEGVVDIFQTVKVLRTQRPAMVQTEDEYQFCFQAALEYLGSFDHYAT.

The signal sequence occupies residues 1–29 (MAPTWSPSVVSVVGPVGLFLVLLARGCLA). At 30-1257 (EEPPRFIREP…PQPIVDGEEG (1228 aa)) the chain is on the extracellular side. Ig-like C2-type domains lie at 33 to 123 (PRFI…AKLT), 135 to 224 (PNID…ANLY), and 232 to 314 (PRFS…AQIT). Cystine bridges form between cysteine 54-cysteine 107 and cysteine 156-cysteine 207. Residues 68 to 72 (KKGKK) form an important for binding to glycosaminoglycan chains region. Residues asparagine 250 and asparagine 295 are each glycosylated (N-linked (GlcNAc...) asparagine). Cysteine 253 and cysteine 298 are joined by a disulfide. 8 Fibronectin type-III domains span residues 321 to 411 (APGT…TGEQ), 416 to 510 (APRN…TQQG), 514 to 603 (QPMN…TLQA), 608 to 705 (PPQD…TDED), 710 to 809 (PPRK…TKGA), 810 to 906 (VLGR…APRG), 907 to 1008 (FPQI…LARD), and 1011 to 1095 (SPKN…TAFN). The span at 691–700 (PGPESSPVVV) shows a compositional bias: low complexity. A disordered region spans residues 691 to 711 (PGPESSPVVVRTDEDVPSAPP). Asparagine 720 is a glycosylation site (N-linked (GlcNAc...) asparagine). The N-linked (GlcNAc...) asparagine glycan is linked to asparagine 916. The helical transmembrane segment at 1258-1278 (LIWVIGPVLAVVFIICIVIAI) threads the bilayer. At 1279 to 1907 (LLYKNKPDSK…YLGSFDHYAT (629 aa)) the chain is on the cytoplasmic side. Basic and acidic residues predominate over residues 1286–1296 (DSKRKDSEPRT). The tract at residues 1286 to 1313 (DSKRKDSEPRTKCLLNNADLAPHHPKDP) is disordered. Tyrosine-protein phosphatase domains follow at residues 1352 to 1607 (LSQE…LLEA) and 1639 to 1898 (MELE…ALEY). Substrate contacts are provided by residues aspartate 1516, 1548–1554 (CSAGVGR), and glutamine 1592. Cysteine 1548 (phosphocysteine intermediate) is an active-site residue. The active-site Phosphocysteine intermediate is cysteine 1839.

Belongs to the protein-tyrosine phosphatase family. Receptor class 2A subfamily. As to quaternary structure, binding to large heparan sulfate proteoglycan structures promotes oligomerization. Binding to chondroitin sulfate proteoglycan does not lead to oligomerization. Interacts (via Ig-like domains) with NTRK3. Interacts (via Ig-like domains) with NTRK1, but does not form detectable complexes with NTRK2. Interacts with PPFIA1, PPFIA2 and PPFIA3. Post-translationally, a cleavage occurs, separating the extracellular domain from the transmembrane segment. This process called 'ectodomain shedding' is thought to be involved in receptor desensitization, signal transduction and/or membrane localization. Detected in brain cortex, cerebellum and thoracic spinal cord (at protein level). Detected in motor cortex and white matter of the spinal cord, but not in spinal cord gray matter. Isoform 1 and isoform 6 are predominantly expressed in the brain (cerebrum and cerebellum) and to a lesser extent in the heart and skeletal muscle. Also found in neuronal-derived cell lines. Detected in the ganglion cell layer of the retina and in glial cells along the optic nerve. Detected in bone marrow and spleen plasmacytoid dendritic cells.

Its subcellular location is the cell membrane. It localises to the cell projection. It is found in the axon. The protein localises to the perikaryon. The protein resides in the cytoplasmic vesicle. Its subcellular location is the secretory vesicle. It localises to the synaptic vesicle membrane. It is found in the synapse. The protein localises to the synaptosome. The protein resides in the postsynaptic density. Its subcellular location is the neuron projection. It localises to the growth cone. It carries out the reaction O-phospho-L-tyrosyl-[protein] + H2O = L-tyrosyl-[protein] + phosphate. Functionally, cell surface receptor that binds to glycosaminoglycans, including chondroitin sulfate proteoglycans and heparan sulfate proteoglycans. Binding to chondroitin sulfate and heparan sulfate proteoglycans has opposite effects on PTPRS oligomerization and regulation of neurite outgrowth. Contributes to the inhibition of neurite and axonal outgrowth by chondroitin sulfate proteoglycans, also after nerve transection. Plays a role in stimulating neurite outgrowth in response to the heparan sulfate proteoglycan GPC2. Required for normal brain development, especially for normal development of the pituitary gland and the olfactory bulb. Functions as a tyrosine phosphatase. Mediates dephosphorylation of NTRK1, NTRK2 and NTRK3. Plays a role in down-regulation of signaling cascades that lead to the activation of Akt and MAP kinases. Down-regulates TLR9-mediated activation of NF-kappa-B, as well as production of TNF, interferon alpha and interferon beta. This is Receptor-type tyrosine-protein phosphatase S (Ptprs) from Mus musculus (Mouse).